The sequence spans 594 residues: Choline dehydrogenase, mitochondrial (594 aa).

Residues 1-29 (MWCLLRGLGRPGALARGALGQQQSLGARA) constitute a mitochondrion transit peptide. Residue 42–71 (SYVVVGAGSAGCVLAGRLTEDPAERVLLLE) participates in FAD binding. N6-succinyllysine is present on Lys436. 2 positions are modified to N6-acetyllysine; alternate: Lys484 and Lys496. Lys484 and Lys496 each carry N6-succinyllysine; alternate. The active-site Proton acceptor is the His511. Residue Lys580 is modified to N6-acetyllysine.

Belongs to the GMC oxidoreductase family. FAD serves as cofactor.

Its subcellular location is the mitochondrion inner membrane. It carries out the reaction choline + A = betaine aldehyde + AH2. The protein operates within amine and polyamine biosynthesis; betaine biosynthesis via choline pathway; betaine aldehyde from choline (cytochrome c reductase route): step 1/1. The sequence is that of Choline dehydrogenase, mitochondrial (CHDH) from Homo sapiens (Human).